The following is a 553-amino-acid chain: Formate--tetrahydrofolate ligase (553 aa).

56–63 (TPKGEGKT) is an ATP binding site.

Belongs to the formate--tetrahydrofolate ligase family.

The catalysed reaction is (6S)-5,6,7,8-tetrahydrofolate + formate + ATP = (6R)-10-formyltetrahydrofolate + ADP + phosphate. It participates in one-carbon metabolism; tetrahydrofolate interconversion. The chain is Formate--tetrahydrofolate ligase from Haloarcula marismortui (strain ATCC 43049 / DSM 3752 / JCM 8966 / VKM B-1809) (Halobacterium marismortui).